We begin with the raw amino-acid sequence, 137 residues long: Basic phospholipase A2 homolog Pgo-K49 (137 aa).

The N-terminal stretch at 1-16 (MRTLLIVAVLLVGVEG) is a signal peptide. Disulfide bonds link Cys-42–Cys-131, Cys-44–Cys-60, Cys-59–Cys-111, Cys-65–Cys-137, Cys-66–Cys-104, Cys-73–Cys-97, and Cys-91–Cys-102. The important for membrane-damaging activities in eukaryotes and bacteria; heparin-binding stretch occupies residues 121-133 (KKYKIHMKFFCKK).

As to expression, expressed by the venom gland.

It is found in the secreted. Its function is as follows. Snake venom phospholipase A2 homolog that lacks enzymatic activity. Is myotoxic. A model of myotoxic mechanism has been proposed: an apo Lys49-PLA2 is activated by the entrance of a hydrophobic molecule (e.g. fatty acid) at the hydrophobic channel of the protein leading to a reorientation of a monomer. This reorientation causes a transition between 'inactive' to 'active' states, causing alignment of C-terminal and membrane-docking sites (MDoS) side-by-side and putting the membrane-disruption sites (MDiS) in the same plane, exposed to solvent and in a symmetric position for both monomers. The MDoS region stabilizes the toxin on membrane by the interaction of charged residues with phospholipid head groups. Subsequently, the MDiS region destabilizes the membrane with penetration of hydrophobic residues. This insertion causes a disorganization of the membrane, allowing an uncontrolled influx of ions (i.e. calcium and sodium), and eventually triggering irreversible intracellular alterations and cell death. This chain is Basic phospholipase A2 homolog Pgo-K49, found in Cerrophidion godmani (Porthidium godmani).